Reading from the N-terminus, the 410-residue chain is Elongation factor Tu (410 aa).

In terms of domain architecture, tr-type G spans 10–214; the sequence is KPHVNIGTIG…EVDAYIPTPE (205 aa). The tract at residues 19 to 26 is G1; it reads GHVDHGKT. 19-26 provides a ligand contact to GTP; the sequence is GHVDHGKT. Position 26 (Thr26) interacts with Mg(2+). The G2 stretch occupies residues 60 to 64; sequence GITIN. Positions 81–84 are G3; sequence DCPG. Residues 81–85 and 136–139 each bind GTP; these read DCPGH and NKAD. Positions 136-139 are G4; that stretch reads NKAD. A G5 region spans residues 174 to 176; the sequence is SAL.

The protein belongs to the TRAFAC class translation factor GTPase superfamily. Classic translation factor GTPase family. EF-Tu/EF-1A subfamily. Monomer.

It is found in the cytoplasm. The enzyme catalyses GTP + H2O = GDP + phosphate + H(+). In terms of biological role, GTP hydrolase that promotes the GTP-dependent binding of aminoacyl-tRNA to the A-site of ribosomes during protein biosynthesis. The protein is Elongation factor Tu of Arthrospira platensis (Spirulina platensis).